The chain runs to 191 residues: Prostaglandin-H2 D-isomerase (191 aa).

Positions 1–24 (MATPNRPWMGLLLLGVLGVLQTPA) are cleaved as a signal peptide. An N-linked (GlcNAc...) asparagine glycan is attached at N51. C65 serves as the catalytic Nucleophile. N-linked (GlcNAc...) asparagine glycosylation occurs at N78. C89 and C186 are disulfide-bonded.

The protein belongs to the calycin superfamily. Lipocalin family. As to quaternary structure, monomer. In terms of tissue distribution, in the male reproductive system, it is expressed in the testis and epididymis, and is secreted into the seminal fluid.

The protein localises to the rough endoplasmic reticulum. Its subcellular location is the nucleus membrane. The protein resides in the golgi apparatus. It localises to the cytoplasm. It is found in the perinuclear region. The protein localises to the secreted. The catalysed reaction is prostaglandin H2 = prostaglandin D2. Functionally, catalyzes the conversion of PGH2 to PGD2, a prostaglandin involved in smooth muscle contraction/relaxation and a potent inhibitor of platelet aggregation. Involved in a variety of CNS functions, such as sedation, NREM sleep and PGE2-induced allodynia, and may have an anti-apoptotic role in oligodendrocytes. Binds small non-substrate lipophilic molecules, including biliverdin, bilirubin, retinal, retinoic acid and thyroid hormone, and may act as a scavenger for harmful hydrophobic molecules and as a secretory retinoid and thyroid hormone transporter. Possibly involved in development and maintenance of the blood-brain, blood-retina, blood-aqueous humor and blood-testis barrier. It is likely to play important roles in both maturation and maintenance of the central nervous system and male reproductive system. Involved in PLA2G3-dependent maturation of mast cells. PLA2G3 is secreted by immature mast cells and acts on nearby fibroblasts upstream to PTDGS to synthesize PGD2, which in turn promotes mast cell maturation and degranulation via PTGDR. The protein is Prostaglandin-H2 D-isomerase (PTGDS) of Ovis aries (Sheep).